The chain runs to 282 residues: UPF0294 protein VIBHAR_03217 (282 aa).

This sequence belongs to the UPF0294 family.

It is found in the cytoplasm. The sequence is that of UPF0294 protein VIBHAR_03217 from Vibrio campbellii (strain ATCC BAA-1116).